Reading from the N-terminus, the 428-residue chain is Enolase (428 aa).

Residue Gln163 participates in (2R)-2-phosphoglycerate binding. The active-site Proton donor is Glu205. Positions 242, 286, and 313 each coordinate Mg(2+). (2R)-2-phosphoglycerate contacts are provided by Lys338, Arg367, Ser368, and Lys389. The Proton acceptor role is filled by Lys338.

It belongs to the enolase family. Requires Mg(2+) as cofactor.

The protein resides in the cytoplasm. Its subcellular location is the secreted. It localises to the cell surface. It carries out the reaction (2R)-2-phosphoglycerate = phosphoenolpyruvate + H2O. It functions in the pathway carbohydrate degradation; glycolysis; pyruvate from D-glyceraldehyde 3-phosphate: step 4/5. Functionally, catalyzes the reversible conversion of 2-phosphoglycerate (2-PG) into phosphoenolpyruvate (PEP). It is essential for the degradation of carbohydrates via glycolysis. The chain is Enolase from Verminephrobacter eiseniae (strain EF01-2).